The sequence spans 510 residues: D-alanine--D-alanyl carrier protein ligase (510 aa).

157–158 (TS) is a binding site for ATP. Aspartate 202 contributes to the D-alanine binding site. 297–302 (NTYGPT) contacts ATP. Valine 306 serves as a coordination point for D-alanine. ATP-binding residues include aspartate 389 and lysine 498. Residue lysine 498 participates in D-alanine binding.

The protein belongs to the ATP-dependent AMP-binding enzyme family. DltA subfamily.

The protein resides in the cytoplasm. The catalysed reaction is holo-[D-alanyl-carrier protein] + D-alanine + ATP = D-alanyl-[D-alanyl-carrier protein] + AMP + diphosphate. It functions in the pathway cell wall biogenesis; lipoteichoic acid biosynthesis. Catalyzes the first step in the D-alanylation of lipoteichoic acid (LTA), the activation of D-alanine and its transfer onto the D-alanyl carrier protein (Dcp) DltC. In an ATP-dependent two-step reaction, forms a high energy D-alanyl-AMP intermediate, followed by transfer of the D-alanyl residue as a thiol ester to the phosphopantheinyl prosthetic group of the Dcp. D-alanylation of LTA plays an important role in modulating the properties of the cell wall in Gram-positive bacteria, influencing the net charge of the cell wall. The polypeptide is D-alanine--D-alanyl carrier protein ligase (Listeria welshimeri serovar 6b (strain ATCC 35897 / DSM 20650 / CCUG 15529 / CIP 8149 / NCTC 11857 / SLCC 5334 / V8)).